A 425-amino-acid chain; its full sequence is Serine--tRNA ligase (425 aa).

An L-serine-binding site is contributed by 233-235 (TAE). 264 to 266 (RAE) contacts ATP. Glu287 serves as a coordination point for L-serine. 351–354 (EISS) lines the ATP pocket. Ser387 serves as a coordination point for L-serine.

This sequence belongs to the class-II aminoacyl-tRNA synthetase family. Type-1 seryl-tRNA synthetase subfamily. Homodimer. The tRNA molecule binds across the dimer.

Its subcellular location is the cytoplasm. It catalyses the reaction tRNA(Ser) + L-serine + ATP = L-seryl-tRNA(Ser) + AMP + diphosphate + H(+). It carries out the reaction tRNA(Sec) + L-serine + ATP = L-seryl-tRNA(Sec) + AMP + diphosphate + H(+). The protein operates within aminoacyl-tRNA biosynthesis; selenocysteinyl-tRNA(Sec) biosynthesis; L-seryl-tRNA(Sec) from L-serine and tRNA(Sec): step 1/1. In terms of biological role, catalyzes the attachment of serine to tRNA(Ser). Is also able to aminoacylate tRNA(Sec) with serine, to form the misacylated tRNA L-seryl-tRNA(Sec), which will be further converted into selenocysteinyl-tRNA(Sec). The polypeptide is Serine--tRNA ligase (Clostridium botulinum (strain Eklund 17B / Type B)).